A 103-amino-acid polypeptide reads, in one-letter code: MVKVIDIGRVVVKVLGREAGRKAVVVDIVDENYVVITGPKPITGVKRRRVNINHIEPTDKKIDIKRGASDDEVAKAIEAAGLVEYMRERVKPSFVGITKAETK.

The protein belongs to the eukaryotic ribosomal protein eL14 family.

The protein is Large ribosomal subunit protein eL14 of Pyrobaculum aerophilum (strain ATCC 51768 / DSM 7523 / JCM 9630 / CIP 104966 / NBRC 100827 / IM2).